The following is a 268-amino-acid chain: uncharacterized protein (268 aa).

An N-terminal signal peptide occupies residues 1–18 (MRGFLLLSLGVFSFSALA). Domain stretches follow at residues 24-184 (SHDL…ELLP) and 185-268 (SPAT…NWLR). An intrachain disulfide couples C110 to C115.

Monomer.

Its subcellular location is the periplasm. This is an uncharacterized protein from Pseudomonas aeruginosa (strain ATCC 15692 / DSM 22644 / CIP 104116 / JCM 14847 / LMG 12228 / 1C / PRS 101 / PAO1).